We begin with the raw amino-acid sequence, 282 residues long: UDP-3-O-acyl-N-acetylglucosamine deacetylase (282 aa).

Residues histidine 80, histidine 240, and aspartate 244 each coordinate Zn(2+). The active-site Proton donor is the histidine 267.

This sequence belongs to the LpxC family. The cofactor is Zn(2+).

Its subcellular location is the plastid. It is found in the chloroplast. The catalysed reaction is a UDP-3-O-[(3R)-3-hydroxyacyl]-N-acetyl-alpha-D-glucosamine + H2O = a UDP-3-O-[(3R)-3-hydroxyacyl]-alpha-D-glucosamine + acetate. Its pathway is glycolipid biosynthesis; lipid IV(A) biosynthesis; lipid IV(A) from (3R)-3-hydroxytetradecanoyl-[acyl-carrier-protein] and UDP-N-acetyl-alpha-D-glucosamine: step 2/6. In terms of biological role, catalyzes the hydrolysis of UDP-3-O-myristoyl-N-acetylglucosamine to form UDP-3-O-myristoylglucosamine and acetate. Involved in the biosynthesis of lipid A, a phosphorylated glycolipid that in bacteria anchors the lipopolysaccharide to the outer membrane of the cell. The target for the lipopolysaccharides produced in the chloroplast could either be the cell envelope of the eukaryote or the plastid membrane. This chain is UDP-3-O-acyl-N-acetylglucosamine deacetylase, found in Cyanidium caldarium (Red alga).